Reading from the N-terminus, the 116-residue chain is Small ribosomal subunit protein uS13m (116 aa).

The protein belongs to the universal ribosomal protein uS13 family. As to quaternary structure, part of the small ribosomal subunit.

It localises to the mitochondrion. Functionally, located at the top of the head of the small subunit, it contacts several helices of the 18S rRNA. This chain is Small ribosomal subunit protein uS13m (RPS13), found in Nicotiana tabacum (Common tobacco).